Here is a 237-residue protein sequence, read N- to C-terminus: Keratin-associated protein 5-5 (237 aa).

8 repeat units span residues C62 to P65, C68 to P71, C74 to P77, C159 to P162, C178 to P181, C188 to P191, C198 to P201, and C227 to P230. The tract at residues C62–P230 is 8 X 4 AA repeats of C-C-X-P.

Belongs to the KRTAP type 5 family. Interacts with hair keratins. In terms of tissue distribution, restricted to hair root, not detected in any other tissues.

In the hair cortex, hair keratin intermediate filaments are embedded in an interfilamentous matrix, consisting of hair keratin-associated protein (KRTAP), which are essential for the formation of a rigid and resistant hair shaft through their extensive disulfide bond cross-linking with abundant cysteine residues of hair keratins. The matrix proteins include the high-sulfur and high-glycine-tyrosine keratins. This Homo sapiens (Human) protein is Keratin-associated protein 5-5 (KRTAP5-5).